A 325-amino-acid polypeptide reads, in one-letter code: Heat-inducible transcription repressor HrcA (325 aa).

Belongs to the HrcA family.

Negative regulator of class I heat shock genes (grpE-dnaK-dnaJ and groELS operons). Prevents heat-shock induction of these operons. The polypeptide is Heat-inducible transcription repressor HrcA (Staphylococcus aureus (strain bovine RF122 / ET3-1)).